Consider the following 539-residue polypeptide: Glutathione synthetase, chloroplastic (539 aa).

The transit peptide at M1–K61 directs the protein to the chloroplast. R193 serves as a coordination point for substrate. An ATP-binding site is contributed by E209. Mg(2+) contacts are provided by E209 and N211. Residues I213 to S216, E281 to N283, Q287, and R335 to Y338 contribute to the substrate site. ATP-binding positions include K374, K428–N437, Y439, M464–I467, and E490. E432 contacts Mg(2+). Residue R515 coordinates substrate. ATP-binding residues include K517 and E523. Position 526–527 (V526–A527) interacts with substrate.

Belongs to the eukaryotic GSH synthase family. Homodimer. Mg(2+) serves as cofactor.

Its subcellular location is the plastid. It is found in the chloroplast. The catalysed reaction is gamma-L-glutamyl-L-cysteine + glycine + ATP = glutathione + ADP + phosphate + H(+). It participates in sulfur metabolism; glutathione biosynthesis; glutathione from L-cysteine and L-glutamate: step 2/2. The polypeptide is Glutathione synthetase, chloroplastic (GSH2) (Arabidopsis thaliana (Mouse-ear cress)).